The following is a 131-amino-acid chain: Large ribosomal subunit protein bL17 (131 aa).

Belongs to the bacterial ribosomal protein bL17 family. As to quaternary structure, part of the 50S ribosomal subunit. Contacts protein L32.

The sequence is that of Large ribosomal subunit protein bL17 from Bordetella petrii (strain ATCC BAA-461 / DSM 12804 / CCUG 43448).